The chain runs to 3073 residues: Adhesion G-protein coupled receptor G4 (3073 aa).

The N-terminal stretch at 1 to 25 is a signal peptide; sequence MRKHILHQRLCGLILVSSFIFLTDS. Over 26–2691 the chain is Extracellular; it reads LSLKGKRLDF…RSTVDAVNER (2666 aa). One can recognise a Pentraxin (PTX) domain in the interval 29–228; it reads KGKRLDFYGE…SPTVDRRLRC (200 aa). Cystine bridges form between Cys-58/Cys-123 and Cys-200/Cys-228. Asn-233 carries N-linked (GlcNAc...) asparagine glycosylation. The segment at 253–272 is disordered; that stretch reads SQTTGLNPHKTSHSSTLLPE. The N-linked (GlcNAc...) asparagine glycan is linked to Asn-662. 2 stretches are compositionally biased toward polar residues: residues 671–696 and 929–951; these read GNATNRDHSSMTTNVSPIEASTESKV and GNSASSPNSASTQALPELPSSST. Disordered stretches follow at residues 671–697 and 924–951; these read GNATNRDHSSMTTNVSPIEASTESKVT and SEKSKGNSASSPNSASTQALPELPSSST. N-linked (GlcNAc...) asparagine glycosylation is found at Asn-1141, Asn-1304, and Asn-1495. Disordered stretches follow at residues 1565–1595, 1741–1760, and 1945–1972; these read FTSSSSLPPKATKTTQASTLNTTPVAHAGPT, TLTNSKVTPRPTESVKSTPT, and ITLSSNPSVNSRATSPTWSSSSLPSDSR. Polar residues predominate over residues 1945–1954; the sequence is ITLSSNPSVN. Over residues 1955–1972 the composition is skewed to low complexity; it reads SRATSPTWSSSSLPSDSR. In terms of domain architecture, GAIN-B spans 2535–2684; the sequence is SSEEVIAPQI…GVLMDLSRST (150 aa). 2 disulfide bridges follow: Cys-2635–Cys-2666 and Cys-2654–Cys-2668. Positions 2635–2684 are GPS; sequence CAFWDFDTNNGLGGWNPSGCKLKESNINYTICQCNHLTHFGVLMDLSRST. The tract at residues 2673-2684 is stachel; that stretch reads HFGVLMDLSRST. Residues 2692–2712 form a helical membrane-spanning segment; sequence ILVIITYTGCGISSIFLGIAM. Residues 2713-2728 lie on the Cytoplasmic side of the membrane; sequence VTYIAFHKLRKDYPSK. A helical membrane pass occupies residues 2729–2749; it reads ILINLCTALLMLNLAFLVNSW. Over 2750–2755 the chain is Extracellular; the sequence is LTSFQK. The chain crosses the membrane as a helical span at residues 2756–2776; the sequence is VGLCITAAVALHYFLLVSLTW. An intrachain disulfide couples Cys-2759 to Cys-2836. Residues 2777–2798 lie on the Cytoplasmic side of the membrane; the sequence is MGLEAVHMYFALVKVFNTYIPN. The helical transmembrane segment at 2799-2819 threads the bilayer; it reads YILKFCLAGWGIPAITVAIIL. The Extracellular portion of the chain corresponds to 2820–2842; sequence SVRKDLYGTLSPTTPFCWIKDDH. A helical transmembrane segment spans residues 2843-2863; the sequence is IFYISVVAYFCLIFLMNLSMF. Topologically, residues 2864-2892 are cytoplasmic; it reads CTVLVQLTSVKSQSQKTRKKMILNDLKGT. Residues 2893–2913 form a helical membrane-spanning segment; it reads ISLTFLLGLTWGFAFFAWGPV. Arg-2914 is a topological domain (extracellular). A helical transmembrane segment spans residues 2915–2935; it reads IFFLYLFAICNTLQGFLIFVF. At 2936-3073 the chain is on the cytoplasmic side; it reads YCVMKESVRE…SSGLGEMFNL (138 aa).

The protein belongs to the G-protein coupled receptor 2 family. Adhesion G-protein coupled receptor (ADGR) subfamily. As to quaternary structure, homodimer; homodimerizes via its Pentraxin domain in a calcium-independent manner. Heterodimer of 2 chains generated by proteolytic processing; the large extracellular N-terminal fragment and the membrane-bound C-terminal fragment predominantly remain associated and non-covalently linked. In terms of processing, autoproteolytically processed at the GPS region of the GAIN-B domain; this cleavage modulates receptor activity.

It is found in the membrane. Its activity is regulated as follows. Forms a heterodimer of 2 chains generated by proteolytic processing that remain associated through non-covalent interactions mediated by the GAIN-B domain. In the inactivated receptor, the Stachel sequence (also named stalk) is embedded in the GAIN-B domain, where it adopts a beta-strand conformation. On activation, the Stachel moves into the 7 transmembrane region and adopts a twisted hook-shaped configuration that forms contacts within the receptor, leading to coupling of a G-alpha protein, which activates signaling. The cleaved GAIN-B and N-terminal domains can then dissociate from the rest of the receptor. Its function is as follows. Orphan adhesion G-protein coupled receptor (aGPCR). Ligand binding causes a conformation change that triggers signaling via guanine nucleotide-binding proteins (G proteins) and modulates the activity of downstream effectors, such as adenylate cyclase. ADGRG4 is coupled to G(s) G proteins and mediates activation of adenylate cyclase activity. May be act as sensor of mechanical forces. The chain is Adhesion G-protein coupled receptor G4 from Mus musculus (Mouse).